Consider the following 592-residue polypeptide: MFVLPPPPPRYTVPVAYAAGASNGMAVPIVETNNIITHPEKGCPLQVGEGTYQLQDDLHLATPPPHPSEAPIINPNPLATVPNPPTSGVKLSLISLGLRNKTAFPSKVQVTARPFGDGNSALAAAPVKDPSKKRKPKNNIIKSSSSFVSRVIIHEATTKRLNDRDPEGLFAFANINRAFQWLDLSSKHKDEPLSKILFTKAHMISHDVNEITKSSAHIDVIMGSSAGDIFWYEPISQKYARINKNGIINSSPVTHIKWIPGSENFFIAAHENGQLVVYDKEKEDALFIPELPEQSAESVKPSRWSLQVLKSVNSKNQKANPVAVWRLANQKITQFAFSPDHRHLAVVLEDGTLRLMDYLQEEVLDVFRSYYGGFTCVCWSPDGKYIVTGGQDDLVTIWSLPERKIIARCQGHDSWVSAVAFDPWRCDERTYRIGSVGDDCNLLLWDFSVGMLHRPKVHHQTSARHRTSLIAPSSQQPNRHRADSSGNRMRSDSQRTAADSESAPDQPVQHPVESRARTALLPPIMSKAVGEDPICWLGFQEDTIMTSSLEGHIRTWDRPRENISDNYGDQKSSETLGTGKEAGHPASSMGSL.

A disordered region spans residues 119–140 (NSALAAAPVKDPSKKRKPKNNI). 4 WD repeats span residues 248–288 (INSS…ALFI), 327–368 (LANQ…DVFR), 369–408 (SYYG…IIAR), and 411–455 (GHDS…LHRP). 2 disordered regions span residues 459–513 (HQTS…HPVE) and 556–592 (WDRP…MGSL). 2 stretches are compositionally biased toward polar residues: residues 484–499 (SSGN…TAAD) and 564–576 (SDNY…SETL). A WD 5 repeat occupies 529–566 (VGEDPICWLGFQEDTIMTSSLEGHIRTWDRPRENISDN).

It belongs to the WD repeat creC family. In terms of assembly, interacts with creB.

In terms of biological role, component of the regulatory network controlling carbon source utilization through ubiquitination and deubiquitination involving creA, creB, creC, creD and acrB. Required to prevent the proteolysis of the CreB deubiquitinating enzyme in the absence of carbon catabolite repression. CreB deubiquitinating enzyme stabilized in a complex with the CreC leads to the expression of genes such as those in the proline and quinate pathways. In Emericella nidulans (strain FGSC A4 / ATCC 38163 / CBS 112.46 / NRRL 194 / M139) (Aspergillus nidulans), this protein is Catabolite repression protein creC (creC).